Reading from the N-terminus, the 107-residue chain is Ferredoxin (107 aa).

2 4Fe-4S ferredoxin-type domains span residues 2-30 and 31-60; these read TYVV…YEGE and FMLV…PETP. The [3Fe-4S] cluster site is built by Cys9 and Cys17. Positions 21, 40, 43, and 46 each coordinate [4Fe-4S] cluster. Cys50 provides a ligand contact to [3Fe-4S] cluster.

[4Fe-4S] cluster is required as a cofactor. The cofactor is [3Fe-4S] cluster.

Ferredoxins are iron-sulfur proteins that transfer electrons in a wide variety of metabolic reactions. In Rickettsia bellii (strain RML369-C), this protein is Ferredoxin (fdxA).